A 279-amino-acid polypeptide reads, in one-letter code: HTH-type transcriptional regulator HdfR (279 aa).

The HTH lysR-type domain occupies 1–58 (MDTELLKTFLEVSRTRHFGRAAESLYLTQSAVSFRIRQLENQLGVNLFTRHRNNIRLT). A DNA-binding region (H-T-H motif) is located at residues 18-37 (FGRAAESLYLTQSAVSFRIR).

It belongs to the LysR transcriptional regulatory family.

Negatively regulates the transcription of the flagellar master operon flhDC by binding to the upstream region of the operon. The polypeptide is HTH-type transcriptional regulator HdfR (Escherichia coli O6:K15:H31 (strain 536 / UPEC)).